Reading from the N-terminus, the 355-residue chain is MNTFGKKLTLTSFGESHGVAIGGVIDGLPAGLKIDADFIQSELDKRRPGQSSFTTARDEADKIEIFSGVFDGMSTGAPIGFAIFNNNQKSNDYENLREIFRPGHADLTYFKKYGIRDHRGGGRASARETAVRVAGGAFAQLLLNELKIEVLSGVLGIGKVVSDKIDFDFAQNSQIYALGNEEAMKEAVNKARSEHDSVGAVVLSVARGVPAGLGEPLYDRLDSALAAALMGINGVKAVEIGAGVNVSSMLGSANNDEMDELGFLSNNAGGILGGISSGAEIVLKSHFKPTPSIFKEQKTLNLAGEAVDFELRGRHDPCIGIRGSVVATAMIRLVLADMLLLNASTKLENLKKIYG.

Arg46 serves as a coordination point for NADP(+). Residues 123–125 (RAS), 233–234 (NG), Gly273, 288–292 (KPTPS), and Arg314 each bind FMN.

It belongs to the chorismate synthase family. Homotetramer. FMNH2 is required as a cofactor.

The enzyme catalyses 5-O-(1-carboxyvinyl)-3-phosphoshikimate = chorismate + phosphate. The protein operates within metabolic intermediate biosynthesis; chorismate biosynthesis; chorismate from D-erythrose 4-phosphate and phosphoenolpyruvate: step 7/7. Functionally, catalyzes the anti-1,4-elimination of the C-3 phosphate and the C-6 proR hydrogen from 5-enolpyruvylshikimate-3-phosphate (EPSP) to yield chorismate, which is the branch point compound that serves as the starting substrate for the three terminal pathways of aromatic amino acid biosynthesis. This reaction introduces a second double bond into the aromatic ring system. This chain is Chorismate synthase, found in Campylobacter concisus (strain 13826).